The following is a 704-amino-acid chain: Lebercilin (704 aa).

Over residues 1 to 14 the composition is skewed to basic and acidic residues; sequence MGERARSPDIEQGK. A disordered region spans residues 1-80; it reads MGERARSPDI…VSPKAVPSKK (80 aa). Ser-7 is subject to Phosphoserine. Over residues 25-40 the composition is skewed to low complexity; the sequence is SSDLGSSPQSSGPSSP. Phosphoserine is present on Ser-48. A compositionally biased stretch (basic and acidic residues) spans 49–63; sequence TREKNPKRHLSDNQV. Positions 105-300 form a coiled coil; that stretch reads KRVLSARLLK…KEKELDIKNI (196 aa). Disordered regions lie at residues 389 to 417 and 476 to 661; these read QEGK…AREE and ELQD…GDEE. Positions 404–417 are enriched in basic and acidic residues; sequence QEARKPESEWAREE. A coiled-coil region spans residues 448-479; sequence AQSVDKFEDEAERLKTEMLLAKLNEINKELQD. Residues 496 to 505 show a composition bias toward basic and acidic residues; the sequence is SKLHSPDRST. Over residues 570 to 591 the composition is skewed to polar residues; the sequence is GKSNPPSQKSSLLDFQSNSSES. Residues 592–608 are compositionally biased toward basic and acidic residues; the sequence is PSKDSLDLMSRKEKKAT. Low complexity predominate over residues 617 to 627; sequence SASNTSVSSKS.

The protein belongs to the LCA5 family. Interacts with NINL. Interacts with OFD1. Interacts with FAM161A. Interacts with components of the IFT complex B. As to expression, detected in several tissues.

Its subcellular location is the cytoplasm. It is found in the cytoskeleton. The protein resides in the cilium axoneme. The protein localises to the cilium basal body. It localises to the cell projection. Its subcellular location is the cilium. In terms of biological role, involved in intraflagellar protein (IFT) transport in photoreceptor cilia. The sequence is that of Lebercilin (Lca5) from Mus musculus (Mouse).